The sequence spans 325 residues: Biotin synthase (325 aa).

The 225-residue stretch at 46-270 (NNSNNIDLCS…IAICKLILPN (225 aa)) folds into the Radical SAM core domain. Positions 64, 68, and 71 each coordinate [4Fe-4S] cluster. [2Fe-2S] cluster is bound by residues serine 107, cysteine 139, cysteine 198, and arginine 274.

This sequence belongs to the radical SAM superfamily. Biotin synthase family. As to quaternary structure, homodimer. Requires [4Fe-4S] cluster as cofactor. The cofactor is [2Fe-2S] cluster.

It catalyses the reaction (4R,5S)-dethiobiotin + (sulfur carrier)-SH + 2 reduced [2Fe-2S]-[ferredoxin] + 2 S-adenosyl-L-methionine = (sulfur carrier)-H + biotin + 2 5'-deoxyadenosine + 2 L-methionine + 2 oxidized [2Fe-2S]-[ferredoxin]. The protein operates within cofactor biosynthesis; biotin biosynthesis; biotin from 7,8-diaminononanoate: step 2/2. Functionally, catalyzes the conversion of dethiobiotin (DTB) to biotin by the insertion of a sulfur atom into dethiobiotin via a radical-based mechanism. In Methanococcus aeolicus (strain ATCC BAA-1280 / DSM 17508 / OCM 812 / Nankai-3), this protein is Biotin synthase.